The sequence spans 852 residues: Kinesin-like protein KIF18B (852 aa).

In terms of domain architecture, Kinesin motor spans threonine 7–isoleucine 351. Glycine 109–threonine 116 serves as a coordination point for ATP. Positions isoleucine 366 to glycine 393 form a coiled coil. Disordered regions lie at residues tyrosine 390–proline 424 and glutamine 437–leucine 485. The residue at position 404 (serine 404) is a Phosphoserine. Threonine 417 is subject to Phosphothreonine. Residues glutamine 451 to alanine 461 show a composition bias toward acidic residues. Phosphoserine is present on residues serine 452, serine 480, and serine 558. 2 disordered regions span residues isoleucine 575 to arginine 594 and glycine 602 to valine 689. Pro residues predominate over residues valine 577 to tyrosine 588. The Nuclear localization signal signature appears at proline 624–proline 632. Serine 633 and serine 639 each carry phosphoserine. An MAPRE1-binding motif is present at residues serine 653–proline 656. Position 662 is a phosphoserine (serine 662). The span at proline 664 to serine 673 shows a compositional bias: polar residues. Position 674 is a phosphothreonine (threonine 674). Residues threonine 711 to phenylalanine 736 form a KIF2C-binding region. Residues methionine 767–arginine 798 form a disordered region. 2 short sequence motifs (MAPRE1-binding) span residues serine 774–proline 777 and alanine 800–proline 803. Serine 822 is subject to Phosphoserine.

It belongs to the TRAFAC class myosin-kinesin ATPase superfamily. Kinesin family. In terms of assembly, interacts with MAPRE1; this interaction is required for efficient accumulation at microtubule plus ends. Interacts with KIF2C at microtubule tips; this interaction increases the affinity of both partners for microtubule plus ends and is required for robust microtubule depolymerization. KIF2C phosphorylation by AURKA or AURKB strongly reduces KIF18B-binding. In terms of tissue distribution, shows a prominent expression in the amygdala.

The protein resides in the nucleus. It is found in the cytoplasm. The protein localises to the cytoskeleton. In complex with KIF2C, constitutes the major microtubule plus-end depolymerizing activity in mitotic cells. Its major role may be to transport KIF2C and/or MAPRE1 along microtubules. This chain is Kinesin-like protein KIF18B (KIF18B), found in Homo sapiens (Human).